The sequence spans 72 residues: Large ribosomal subunit protein bL31 (72 aa).

Zn(2+) contacts are provided by C16, C18, C38, and C41.

This sequence belongs to the bacterial ribosomal protein bL31 family. Type A subfamily. As to quaternary structure, part of the 50S ribosomal subunit. Requires Zn(2+) as cofactor.

Binds the 23S rRNA. This is Large ribosomal subunit protein bL31 from Aromatoleum aromaticum (strain DSM 19018 / LMG 30748 / EbN1) (Azoarcus sp. (strain EbN1)).